Consider the following 404-residue polypeptide: Glucose-1-phosphate adenylyltransferase (404 aa).

Alpha-D-glucose 1-phosphate contacts are provided by residues tyrosine 99, glycine 164, 179–180 (EK), and serine 197.

This sequence belongs to the bacterial/plant glucose-1-phosphate adenylyltransferase family. As to quaternary structure, homotetramer.

It carries out the reaction alpha-D-glucose 1-phosphate + ATP + H(+) = ADP-alpha-D-glucose + diphosphate. It functions in the pathway glycan biosynthesis; glycogen biosynthesis. Involved in the biosynthesis of ADP-glucose, a building block required for the elongation reactions to produce glycogen. Catalyzes the reaction between ATP and alpha-D-glucose 1-phosphate (G1P) to produce pyrophosphate and ADP-Glc. This Rhodococcus erythropolis (strain PR4 / NBRC 100887) protein is Glucose-1-phosphate adenylyltransferase.